The chain runs to 927 residues: Probable dipeptidyl-aminopeptidase B (927 aa).

2 disordered regions span residues 1–44 and 58–101; these read MAPA…TTSI and GHFE…KNDG. Topologically, residues 1-108 are cytoplasmic; sequence MAPAPGMAPY…NDGMNRGMRR (108 aa). Basic and acidic residues-rich tracts occupy residues 19–36 and 58–70; these read HRPE…HESE and GHFE…PMKE. Residues 109-129 traverse the membrane as a helical; Signal-anchor for type II membrane protein segment; that stretch reads TLIIVAGLLISAWVVGLFFYV. At 130-927 the chain is on the vacuolar side; the sequence is SHKSYKPASQ…RSIQPILPIL (798 aa). Asn-365 and Asn-530 each carry an N-linked (GlcNAc...) asparagine glycan. Ser-769 serves as the catalytic Charge relay system. Residue Asn-828 is glycosylated (N-linked (GlcNAc...) asparagine). Catalysis depends on charge relay system residues Asp-846 and His-879.

It belongs to the peptidase S9B family.

It localises to the vacuole membrane. The enzyme catalyses Release of an N-terminal dipeptide, Xaa-Yaa-|-Zaa-, from a polypeptide, preferentially when Yaa is Pro, provided Zaa is neither Pro nor hydroxyproline.. Functionally, type IV dipeptidyl-peptidase which removes N-terminal dipeptides sequentially from polypeptides having unsubstituted N-termini provided that the penultimate residue is proline. This is Probable dipeptidyl-aminopeptidase B (DAPB) from Podospora anserina (strain S / ATCC MYA-4624 / DSM 980 / FGSC 10383) (Pleurage anserina).